The following is a 340-amino-acid chain: Proline-rich transmembrane protein 2 (340 aa).

The segment at 1–261 (MAASSSEISE…AGPGVEGGEG (261 aa)) is disordered. The Cytoplasmic portion of the chain corresponds to 1-268 (MAASSSEISE…GEGTQKPRDY (268 aa)). The segment covering 9–18 (SEMKGVEESP) has biased composition (basic and acidic residues). Residue Ser-28 is modified to Phosphoserine. Thr-74 is subject to Phosphothreonine. Composition is skewed to pro residues over residues 131-155 (PPEP…PKPA) and 197-207 (APEPHSPPSKK). Ser-238 is subject to Phosphoserine. Residue Arg-240 is modified to Omega-N-methylarginine. 2 positions are modified to phosphoserine: Ser-248 and Ser-249. Residues 269–289 (IILAILSCFCPMWPVNIVAFA) constitute an intramembrane region (helical). Residues 290–317 (YAVMSRNSLQQGDVDGAQRLGRVAKLLS) are Cytoplasmic-facing. Residues 318–338 (IVALVGGVLIIIASCVINLGV) traverse the membrane as a helical segment. The Extracellular portion of the chain corresponds to 339–340 (YK).

Belongs to the CD225/Dispanin family. As to quaternary structure, component of the outer core of AMPAR complex. AMPAR complex consists of an inner core made of 4 pore-forming GluA/GRIA proteins (GRIA1, GRIA2, GRIA3 and GRIA4) and 4 major auxiliary subunits arranged in a twofold symmetry. One of the two pairs of distinct binding sites is occupied either by CNIH2, CNIH3 or CACNG2, CACNG3. The other harbors CACNG2, CACNG3, CACNG4, CACNG8 or GSG1L. This inner core of AMPAR complex is complemented by outer core constituents binding directly to the GluA/GRIA proteins at sites distinct from the interaction sites of the inner core constituents. Outer core constituents include at least PRRT1, PRRT2, CKAMP44/SHISA9, FRRS1L and NRN1. The proteins of the inner and outer core serve as a platform for other, more peripherally associated AMPAR constituents. Alone or in combination, these auxiliary subunits control the gating and pharmacology of the AMPAR complex and profoundly impact their biogenesis and protein processing. Interacts with intersectin 1/ITSN1. Interacts with SNARE complex components, including SNAP25, STX1A, SYT1 and SYT2; this interaction may inhibit SNARE complex formation.

The protein localises to the cell membrane. The protein resides in the presynaptic cell membrane. It localises to the synapse. Its subcellular location is the cell projection. It is found in the axon. The protein localises to the cytoplasmic vesicle. The protein resides in the secretory vesicle. It localises to the synaptic vesicle membrane. Its subcellular location is the postsynaptic density membrane. It is found in the dendritic spine. In terms of biological role, as a component of the outer core of AMPAR complex, may be involved in synaptic transmission in the central nervous system. In hippocampal neurons, in presynaptic terminals, plays an important role in the final steps of neurotransmitter release, possibly by regulating Ca(2+)-sensing. In the cerebellum, may inhibit SNARE complex formation and down-regulate short-term facilitation. The protein is Proline-rich transmembrane protein 2 (PRRT2) of Homo sapiens (Human).